The primary structure comprises 197 residues: uncharacterized protein (197 aa).

Residues 1–135 form a disordered region; that stretch reads MKTPWKFLAR…ERGKRANARV (135 aa). Over residues 14–32 the composition is skewed to polar residues; the sequence is RQPSGKTQESSAGNDTGSK. Over residues 83–96 the composition is skewed to basic and acidic residues; that stretch reads IHADEAQTTARDEA. A compositionally biased stretch (basic residues) spans 116 to 132; sequence SQRKPRIKRRERGKRAN.

The protein to Rhizobium NGR234A y4nF and y4aO.

This is an uncharacterized protein from Rhizobium meliloti (strain 1021) (Ensifer meliloti).